The sequence spans 629 residues: 1-deoxy-D-xylulose-5-phosphate synthase (629 aa).

Residues His-85 and 126–128 (GHS) contribute to the thiamine diphosphate site. Asp-157 serves as a coordination point for Mg(2+). Residues 158–159 (GS), Asn-186, Tyr-293, and Glu-373 contribute to the thiamine diphosphate site. Mg(2+) is bound at residue Asn-186.

This sequence belongs to the transketolase family. DXPS subfamily. As to quaternary structure, homodimer. The cofactor is Mg(2+). Requires thiamine diphosphate as cofactor.

The catalysed reaction is D-glyceraldehyde 3-phosphate + pyruvate + H(+) = 1-deoxy-D-xylulose 5-phosphate + CO2. It functions in the pathway metabolic intermediate biosynthesis; 1-deoxy-D-xylulose 5-phosphate biosynthesis; 1-deoxy-D-xylulose 5-phosphate from D-glyceraldehyde 3-phosphate and pyruvate: step 1/1. Functionally, catalyzes the acyloin condensation reaction between C atoms 2 and 3 of pyruvate and glyceraldehyde 3-phosphate to yield 1-deoxy-D-xylulose-5-phosphate (DXP). This is 1-deoxy-D-xylulose-5-phosphate synthase from Helicobacter hepaticus (strain ATCC 51449 / 3B1).